The following is a 340-amino-acid chain: Ketol-acid reductoisomerase (NADP(+)) (340 aa).

The KARI N-terminal Rossmann domain occupies 1–183; the sequence is MAITVYYDKD…GGGRTGIIET (183 aa). Residues 26–29, Arg49, Ser52, Ser54, and 84–87 each bind NADP(+); these read FGSQ and DEIQ. Residue His109 is part of the active site. Gly135 is a binding site for NADP(+). In terms of domain architecture, KARI C-terminal knotted spans 184–329; the sequence is TFKAETETDL…RNLRAMMPWI (146 aa). Mg(2+) is bound by residues Asp192, Glu196, Glu228, and Glu232. Ser253 lines the substrate pocket.

This sequence belongs to the ketol-acid reductoisomerase family. Mg(2+) is required as a cofactor.

It carries out the reaction (2R)-2,3-dihydroxy-3-methylbutanoate + NADP(+) = (2S)-2-acetolactate + NADPH + H(+). The catalysed reaction is (2R,3R)-2,3-dihydroxy-3-methylpentanoate + NADP(+) = (S)-2-ethyl-2-hydroxy-3-oxobutanoate + NADPH + H(+). Its pathway is amino-acid biosynthesis; L-isoleucine biosynthesis; L-isoleucine from 2-oxobutanoate: step 2/4. It functions in the pathway amino-acid biosynthesis; L-valine biosynthesis; L-valine from pyruvate: step 2/4. Its function is as follows. Involved in the biosynthesis of branched-chain amino acids (BCAA). Catalyzes an alkyl-migration followed by a ketol-acid reduction of (S)-2-acetolactate (S2AL) to yield (R)-2,3-dihydroxy-isovalerate. In the isomerase reaction, S2AL is rearranged via a Mg-dependent methyl migration to produce 3-hydroxy-3-methyl-2-ketobutyrate (HMKB). In the reductase reaction, this 2-ketoacid undergoes a metal-dependent reduction by NADPH to yield (R)-2,3-dihydroxy-isovalerate. This is Ketol-acid reductoisomerase (NADP(+)) from Campylobacter jejuni subsp. jejuni serotype O:6 (strain 81116 / NCTC 11828).